A 434-amino-acid chain; its full sequence is Gamma-enolase (434 aa).

S2 is subject to N-acetylserine. K5 is subject to N6-acetyllysine. Phosphothreonine is present on T26. S40 contributes to the Mg(2+) binding site. Phosphotyrosine is present on Y44. The residue at position 60 (K60) is an N6-acetyllysine; alternate. At K60 the chain carries N6-succinyllysine; alternate. K64 is subject to N6-acetyllysine. An N6-acetyllysine; alternate modification is found at K89. K89 carries the N6-succinyllysine; alternate modification. Substrate-binding residues include H158 and E167. K193, K197, and K199 each carry N6-acetyllysine. An N6-acetyllysine; alternate modification is found at K202. Residue K202 forms a Glycyl lysine isopeptide (Lys-Gly) (interchain with G-Cter in SUMO2); alternate linkage. The Proton donor role is filled by E210. N6-acetyllysine; alternate is present on residues K228 and K233. Residue K228 is modified to N6-succinyllysine; alternate. K233 bears the N6-(2-hydroxyisobutyryl)lysine; alternate mark. D245 provides a ligand contact to Mg(2+). An N6-acetyllysine modification is found at K256. At S263 the chain carries Phosphoserine. Phosphotyrosine is present on Y287. S291 bears the Phosphoserine mark. E293 and D318 together coordinate Mg(2+). E293 and D318 together coordinate substrate. N6-acetyllysine is present on residues K335 and K343. K343 functions as the Proton acceptor in the catalytic mechanism. Residues 370-373 (SHRS) and K394 each bind substrate. N6-acetyllysine is present on K406.

It belongs to the enolase family. As to quaternary structure, mammalian enolase is composed of 3 isozyme subunits, alpha, beta and gamma, which can form homodimers or heterodimers which are cell-type and development-specific. It depends on Mg(2+) as a cofactor. The alpha/alpha homodimer is expressed in embryo and in most adult tissues. The alpha/beta heterodimer and the beta/beta homodimer are found in striated muscle, and the alpha/gamma heterodimer and the gamma/gamma homodimer in neurons.

The protein localises to the cytoplasm. Its subcellular location is the cell membrane. The catalysed reaction is (2R)-2-phosphoglycerate = phosphoenolpyruvate + H2O. The protein operates within carbohydrate degradation; glycolysis; pyruvate from D-glyceraldehyde 3-phosphate: step 4/5. Has neurotrophic and neuroprotective properties on a broad spectrum of central nervous system (CNS) neurons. Binds, in a calcium-dependent manner, to cultured neocortical neurons and promotes cell survival. In Homo sapiens (Human), this protein is Gamma-enolase (ENO2).